The following is a 374-amino-acid chain: MVLWESPRQCSSWTLCEGFCWLLLLPVMLLIVARPVKLAAFPTSLSDCQTPTGWNCSGYDDRENDLFLCDTNTCKFDGECLRIGDTVTCVCQFKCNSDYVPVCGSNGESYQNECYLRQAACKQQSEILVVSEGSCATDAGSGSGDGVHEGSGETSQKETSTCDICQFGAECDEDAEDVWCVCNIDCSQTNFNPLCASDGKSYDNACQIKEASCQKQEKIEVMSLGRCQDNTTTTTKSEDGHYARTDFAENANKLEESAREHHIPCPEHYNGFCMHGKCEHSINMQEPSCRCDAGYTGQHCEKKDYSVLYVVPGPVRFQYVLIAAVIGTIQIAVICVVVLCITRKCPRSNRIHRQKQNTGHYSSDNTTRASTRLI.

An N-terminal signal peptide occupies residues 1 to 39 (MVLWESPRQCSSWTLCEGFCWLLLLPVMLLIVARPVKLA). The Extracellular segment spans residues 40–320 (AFPTSLSDCQ…VPGPVRFQYV (281 aa)). N55 carries an N-linked (GlcNAc...) asparagine glycan. Kazal-like domains follow at residues 90–137 (VCQF…SCAT) and 181–229 (VCNI…RCQD). Intrachain disulfides connect C91/C121, C95/C114, C103/C135, C182/C213, C186/C206, C195/C227, C265/C278, C273/C289, and C291/C300. An EGF-like domain is found at 261-301 (HHIPCPEHYNGFCMHGKCEHSINMQEPSCRCDAGYTGQHCE). The segment at 303-320 (KDYSVLYVVPGPVRFQYV) is required for shedding. Residues 321-341 (LIAAVIGTIQIAVICVVVLCI) form a helical membrane-spanning segment. At 342-374 (TRKCPRSNRIHRQKQNTGHYSSDNTTRASTRLI) the chain is on the cytoplasmic side. The segment at 353 to 374 (RQKQNTGHYSSDNTTRASTRLI) is disordered. The span at 356 to 374 (QNTGHYSSDNTTRASTRLI) shows a compositional bias: polar residues.

It belongs to the tomoregulin family. Post-translationally, O-glycosylated; contains chondroitin sulfate glycosaminoglycans. A soluble form (TMEFF2-ECD) is produced by proteolytic shedding. This shedding can be induced by phorbol ester or pro-inflammatory cytokines such as TNFalpha, and is mediated by a metalloproteinase ADAM.

The protein localises to the membrane. Its function is as follows. May be a survival factor for hippocampal and mesencephalic neurons. The shedded form may up-regulate cell proliferation. This Bos taurus (Bovine) protein is Tomoregulin-2 (TMEFF2).